Consider the following 614-residue polypeptide: Probable peptide-binding protein YejA (614 aa).

The first 27 residues, 1 to 27 (MILAPLKSRILIALAASALLIPAVASA), serve as a signal peptide directing secretion.

The protein belongs to the bacterial solute-binding protein 5 family. In terms of assembly, the complex is composed of one ATP-binding protein (YejF), two transmembrane proteins (YejB and YejE) and a solute-binding protein (YejA).

Its subcellular location is the periplasm. Its function is as follows. Probably part of the ABC transporter complex YejABEF, which is likely involved in broad-spectrum peptide import. This is Probable peptide-binding protein YejA from Agrobacterium fabrum (strain C58 / ATCC 33970) (Agrobacterium tumefaciens (strain C58)).